Reading from the N-terminus, the 38-residue chain is Large ribosomal subunit protein bL36A (38 aa).

It belongs to the bacterial ribosomal protein bL36 family.

The chain is Large ribosomal subunit protein bL36A from Cronobacter sakazakii (strain ATCC BAA-894) (Enterobacter sakazakii).